The following is a 244-amino-acid chain: Sepiapterin reductase (244 aa).

Residues 9-15, 40-42, 66-67, and Asn93 contribute to the NADP(+) site; these read GAGKGIG, SRT, and DI. Residue Phe99 participates in substrate binding. Thr116 contributes to the NADP(+) binding site. Substrate is bound by residues Ser145 and Tyr158. NADP(+) is bound by residues Tyr158, Lys162, and 191-196; that span reads VYTPMW. Trp196 is a substrate binding site.

This sequence belongs to the short-chain dehydrogenases/reductases (SDR) family. As to quaternary structure, homodimer.

It localises to the cytoplasm. The enzyme catalyses L-threo-7,8-dihydrobiopterin + NADP(+) = L-sepiapterin + NADPH + H(+). The catalysed reaction is L-threo-tetrahydrobiopterin + 2 NADP(+) = 6-pyruvoyl-5,6,7,8-tetrahydropterin + 2 NADPH + 2 H(+). Slightly inhibited by N-acetyldopamine but not by N-acetylserotonin or melatonin. In terms of biological role, catalyzes the final reductions in tetra-hydrobiopterin biosynthesis to form 5,6,7,8-tetrahydrobiopterin. This is Sepiapterin reductase from Chlorobaculum tepidum (strain ATCC 49652 / DSM 12025 / NBRC 103806 / TLS) (Chlorobium tepidum).